The chain runs to 296 residues: Galectin-3 (296 aa).

The span at 1 to 11 (MADSFSLNDAL) shows a compositional bias: polar residues. The tract at residues 1-150 (MADSFSLNDA…PSAPGAYPAA (150 aa)) is disordered. At Ala-2 the chain carries N-acetylalanine. Phosphoserine; by CK1 is present on residues Ser-6 and Ser-12. Low complexity-rich tracts occupy residues 12 to 31 (SGSG…NQPA) and 38 to 47 (GASYPGAYPG). Tandem repeats lie at residues 36–44 (YPGASYPGA), 45–53 (YPGQAPPGG), 54–62 (YPGQAPPGG), 63–71 (YPGQAPPGG), 72–80 (YPGQAPPGG), 81–89 (YPGQAPPGG), 90–98 (YPGQAPPGG), and 99–107 (YPGQAPPGT). A 12 X 9 AA tandem repeats of Y-P-G-X(3)-P-G-[GAT] region spans residues 36–143 (YPGASYPGAY…AYPPPGQPSA (108 aa)). A compositionally biased stretch (pro residues) spans 48–120 (QAPPGGYPGQ…PTAPAYPGPT (73 aa)). Residues 108–115 (YPGPTAPA) form a 9; approximate repeat. Residues 116 to 124 (YPGPTAPGT) form repeat 10. Low complexity predominate over residues 121-133 (APGTQPGQPSGPG). The 11; approximate repeat unit spans residues 125–134 (QPGQPSGPGA). The stretch at 135 to 143 (YPPPGQPSA) is one 12; approximate repeat. Residues 164-294 (YDLPLPGGVK…DIDLTSASYA (131 aa)) enclose the Galectin domain. 227–233 (WGKEERQ) lines the a beta-D-galactoside pocket. A Nuclear export signal motif is present at residues 272 to 287 (KNLPEISKLGISGDID).

As to quaternary structure, probably forms homo- or heterodimers. Interacts with DMBT1. Interacts with CD6 and ALCAM. Forms a complex with the ITGA3, ITGB1 and CSPG4. Interacts with LGALS3BP, LYPD3, ZFTRAF1 and UACA. Interacts with TRIM16; this interaction mediates autophagy of damage endomembranes. Interacts with cargo receptor TMED10; the interaction mediates the translocation from the cytoplasm into the ERGIC (endoplasmic reticulum-Golgi intermediate compartment) and thereby secretion. Interacts with and inhibits by binding NCR3/NKp30. In terms of processing, the degree of phosphorylation is higher in the cytoplasmic form than in the nuclear form. In protein isolated from a canine kidney cell line, 90% of the phosphate was on Ser-6 and 10% was on Ser-12.

It localises to the cytoplasm. Its subcellular location is the nucleus. It is found in the secreted. In terms of biological role, galactose-specific lectin which binds IgE. May mediate with the alpha-3, beta-1 integrin the stimulation by CSPG4 of endothelial cells migration. Together with DMBT1, required for terminal differentiation of columnar epithelial cells during early embryogenesis. In the nucleus: acts as a pre-mRNA splicing factor. Involved in acute inflammatory responses including neutrophil activation and adhesion, chemoattraction of monocytes macrophages, opsonization of apoptotic neutrophils, and activation of mast cells. Together with TRIM16, coordinates the recognition of membrane damage with mobilization of the core autophagy regulators ATG16L1 and BECN1 in response to damaged endomembranes. When secreted, interacts with NK cell-activating receptor NCR3/NKp30 acting as an inhibitory ligand which antagonizes NK cell attack. The protein is Galectin-3 (LGALS3) of Canis lupus familiaris (Dog).